The primary structure comprises 555 residues: Chaperonin GroEL (555 aa).

Residues 29–32 (TLGP), Lys50, 86–90 (DGTTT), Gly418, and Asp499 each bind ATP. A disordered region spans residues 528-555 (HEEDNNTGNRSGGGVGGGHHGGMGGMDF). Positions 537–555 (RSGGGVGGGHHGGMGGMDF) are enriched in gly residues.

The protein belongs to the chaperonin (HSP60) family. In terms of assembly, forms a cylinder of 14 subunits composed of two heptameric rings stacked back-to-back. Interacts with the co-chaperonin GroES.

Its subcellular location is the cytoplasm. The catalysed reaction is ATP + H2O + a folded polypeptide = ADP + phosphate + an unfolded polypeptide.. Its function is as follows. Together with its co-chaperonin GroES, plays an essential role in assisting protein folding. The GroEL-GroES system forms a nano-cage that allows encapsulation of the non-native substrate proteins and provides a physical environment optimized to promote and accelerate protein folding. This is Chaperonin GroEL from Orientia tsutsugamushi (strain Ikeda) (Rickettsia tsutsugamushi).